Consider the following 244-residue polypeptide: 1-(5-phosphoribosyl)-5-[(5-phosphoribosylamino)methylideneamino] imidazole-4-carboxamide isomerase (244 aa).

Asp-10 serves as the catalytic Proton acceptor. Asp-132 (proton donor) is an active-site residue.

It belongs to the HisA/HisF family.

Its subcellular location is the cytoplasm. It carries out the reaction 1-(5-phospho-beta-D-ribosyl)-5-[(5-phospho-beta-D-ribosylamino)methylideneamino]imidazole-4-carboxamide = 5-[(5-phospho-1-deoxy-D-ribulos-1-ylimino)methylamino]-1-(5-phospho-beta-D-ribosyl)imidazole-4-carboxamide. It participates in amino-acid biosynthesis; L-histidine biosynthesis; L-histidine from 5-phospho-alpha-D-ribose 1-diphosphate: step 4/9. The chain is 1-(5-phosphoribosyl)-5-[(5-phosphoribosylamino)methylideneamino] imidazole-4-carboxamide isomerase from Xanthomonas campestris pv. campestris (strain 8004).